We begin with the raw amino-acid sequence, 163 residues long: Transcription elongation factor GreB (163 aa).

A coiled-coil region spans residues 54 to 76 (GKRRMREIDRRIRFLTKRLEAAV).

Belongs to the GreA/GreB family. GreB subfamily.

Functionally, necessary for efficient RNA polymerase transcription elongation past template-encoded arresting sites. The arresting sites in DNA have the property of trapping a certain fraction of elongating RNA polymerases that pass through, resulting in locked ternary complexes. Cleavage of the nascent transcript by cleavage factors such as GreA or GreB allows the resumption of elongation from the new 3'terminus. GreB releases sequences of up to 9 nucleotides in length. The sequence is that of Transcription elongation factor GreB from Neisseria meningitidis serogroup B (strain ATCC BAA-335 / MC58).